Consider the following 94-residue polypeptide: Small ribosomal subunit protein uS19 (94 aa).

This sequence belongs to the universal ribosomal protein uS19 family.

Functionally, protein S19 forms a complex with S13 that binds strongly to the 16S ribosomal RNA. This is Small ribosomal subunit protein uS19 from Endomicrobium trichonymphae.